The chain runs to 517 residues: GMP synthase [glutamine-hydrolyzing] (517 aa).

The Glutamine amidotransferase type-1 domain maps to 9–199 (RILILDFGSQ…VLNACGCEGL (191 aa)). Cysteine 86 functions as the Nucleophile in the catalytic mechanism. Active-site residues include histidine 173 and glutamate 175. The GMPS ATP-PPase domain maps to 200-392 (WTSASIIEDA…LGLPYNMLYR (193 aa)). 227–233 (SGGVDSS) provides a ligand contact to ATP.

As to quaternary structure, homodimer.

It carries out the reaction XMP + L-glutamine + ATP + H2O = GMP + L-glutamate + AMP + diphosphate + 2 H(+). The protein operates within purine metabolism; GMP biosynthesis; GMP from XMP (L-Gln route): step 1/1. Catalyzes the synthesis of GMP from XMP. The protein is GMP synthase [glutamine-hydrolyzing] of Vibrio atlanticus (strain LGP32) (Vibrio splendidus (strain Mel32)).